Here is a 379-residue protein sequence, read N- to C-terminus: uncharacterized protein (379 aa).

This is an uncharacterized protein from Tortricidae (ClGV).